The following is a 327-amino-acid chain: Small ribosomal subunit protein uS4m (327 aa).

An S4 RNA-binding domain is found at 96-154; that stretch reads SRLDMSIHRALFASSALQARQLVLHGKVHVNGKPERRAYRQLLPGDLVTVDQKSVMNCV. The segment covering 156-173 has biased composition (polar residues); the sequence is ASSNNTPSIQDGKQTEQV. The tract at residues 156-199 is disordered; sequence ASSNNTPSIQDGKQTEQVSSKDGENEKKKDNDDDLFEQTSNGKL. Residues 174-186 are compositionally biased toward basic and acidic residues; that stretch reads SSKDGENEKKKDN.

It belongs to the universal ribosomal protein uS4 family. As to quaternary structure, component of the mitochondrial small ribosomal subunit (mt-SSU). Mature yeast 74S mitochondrial ribosomes consist of a small (37S) and a large (54S) subunit. The 37S small subunit contains a 15S ribosomal RNA (15S mt-rRNA) and at least 32 different proteins. The 54S large subunit contains a 21S rRNA (21S mt-rRNA) and at least 45 different proteins. uS3m, uS4m and uS5m form the narrow entry site of the mRNA channel.

It localises to the mitochondrion. Component of the mitochondrial ribosome (mitoribosome), a dedicated translation machinery responsible for the synthesis of mitochondrial genome-encoded proteins, including at least some of the essential transmembrane subunits of the mitochondrial respiratory chain. The mitoribosomes are attached to the mitochondrial inner membrane and translation products are cotranslationally integrated into the membrane. This chain is Small ribosomal subunit protein uS4m (nam9), found in Schizosaccharomyces pombe (strain 972 / ATCC 24843) (Fission yeast).